The following is a 181-amino-acid chain: Regulator of G-protein signaling 5 (181 aa).

The RGS domain maps to 64 to 180 (SLDKLLQNNY…VRSEFYQEFI (117 aa)).

The protein localises to the cytoplasm. It is found in the membrane. Functionally, inhibits signal transduction by increasing the GTPase activity of G protein alpha subunits thereby driving them into their inactive GDP-bound form. Binds to G(i)-alpha and G(o)-alpha, but not to G(s)-alpha. This Sus scrofa (Pig) protein is Regulator of G-protein signaling 5 (RGS5).